A 247-amino-acid polypeptide reads, in one-letter code: Sugar fermentation stimulation protein homolog (247 aa).

The protein belongs to the SfsA family.

This is Sugar fermentation stimulation protein homolog from Methanococcoides burtonii (strain DSM 6242 / NBRC 107633 / OCM 468 / ACE-M).